The sequence spans 181 residues: 6,7-dimethyl-8-ribityllumazine synthase (181 aa).

5-amino-6-(D-ribitylamino)uracil-binding positions include Phe24, 62-64, and 86-88; these read SFE and AII. Residue 91-92 coordinates (2S)-2-hydroxy-3-oxobutyl phosphate; that stretch reads QT. The Proton donor role is filled by His94. 5-amino-6-(D-ribitylamino)uracil is bound at residue Phe119. Arg133 contacts (2S)-2-hydroxy-3-oxobutyl phosphate.

The protein belongs to the DMRL synthase family.

The enzyme catalyses (2S)-2-hydroxy-3-oxobutyl phosphate + 5-amino-6-(D-ribitylamino)uracil = 6,7-dimethyl-8-(1-D-ribityl)lumazine + phosphate + 2 H2O + H(+). The protein operates within cofactor biosynthesis; riboflavin biosynthesis; riboflavin from 2-hydroxy-3-oxobutyl phosphate and 5-amino-6-(D-ribitylamino)uracil: step 1/2. In terms of biological role, catalyzes the formation of 6,7-dimethyl-8-ribityllumazine by condensation of 5-amino-6-(D-ribitylamino)uracil with 3,4-dihydroxy-2-butanone 4-phosphate. This is the penultimate step in the biosynthesis of riboflavin. The protein is 6,7-dimethyl-8-ribityllumazine synthase of Microcystis aeruginosa (strain NIES-843 / IAM M-2473).